A 139-amino-acid polypeptide reads, in one-letter code: 3-hydroxyacyl-[acyl-carrier-protein] dehydratase FabZ (139 aa).

The active site involves His-46.

This sequence belongs to the thioester dehydratase family. FabZ subfamily.

It localises to the cytoplasm. It carries out the reaction a (3R)-hydroxyacyl-[ACP] = a (2E)-enoyl-[ACP] + H2O. In terms of biological role, involved in unsaturated fatty acids biosynthesis. Catalyzes the dehydration of short chain beta-hydroxyacyl-ACPs and long chain saturated and unsaturated beta-hydroxyacyl-ACPs. This Streptococcus pyogenes serotype M3 (strain ATCC BAA-595 / MGAS315) protein is 3-hydroxyacyl-[acyl-carrier-protein] dehydratase FabZ.